The following is a 1435-amino-acid chain: Protein clueless (1435 aa).

Residues 1 to 97 (MALEMDSKNS…KPEGDGDADA (97 aa)) are disordered. Positions 18-35 (AAAATTKTNKAKENNNLA) are enriched in low complexity. Residues 38–50 (KKNQSQNLVNGNG) show a composition bias toward polar residues. The span at 58–67 (TKKKGKKNRN) shows a compositional bias: basic residues. At Ser-266 the chain carries Phosphoserine. Residues 420–662 (RAEDAFSSKL…RTFPPDVNFL (243 aa)) form the Clu domain. 2 stretches are compositionally biased toward basic and acidic residues: residues 719–731 (KKPEETQSEEKKQ) and 752–762 (PNEKEKDTPVE). Disordered regions lie at residues 719 to 762 (KKPE…TPVE) and 952 to 998 (VSND…SSSS). A compositionally biased stretch (basic residues) spans 959–975 (KKRGGNGGKHNKHKSSK). Low complexity predominate over residues 988–998 (NGGSTTSSSSS). TPR repeat units follow at residues 1096-1129 (AYNFYTTGQAKIQQGLFKEGYELISEALNLLNNV), 1222-1255 (ALIDSNISLILHALGEYELSLRFIEHALKLNLKY), and 1257-1290 (GNKAMHVAVSYHLMARTQSCMGDFRSALNNEKET). The interval 1407-1435 (EVLAPQDNNKEQAATAQQLTNGDKVAVSS) is disordered. A compositionally biased stretch (polar residues) spans 1417–1435 (EQAATAQQLTNGDKVAVSS).

The protein belongs to the CLU family.

It is found in the cytoplasm. MRNA-binding protein involved in proper cytoplasmic distribution of mitochondria. The polypeptide is Protein clueless (Drosophila persimilis (Fruit fly)).